Here is a 396-residue protein sequence, read N- to C-terminus: Probable splicing factor YJU2B (396 aa).

Positions 1 to 26 (MGERKGVNKYYPPDFNPEKHGSLNRY) are disordered. Serine 40 is modified (phosphoserine). The stretch at 182 to 214 (LNSMLRRRFREKKKAIQEEEERDQALQAKASLT) forms a coiled coil. The interval 295–396 (IVRRRSRDVP…VADYSDSESE (102 aa)) is disordered. Phosphoserine is present on serine 306. A compositionally biased stretch (basic and acidic residues) spans 315 to 327 (KSGEPRVPEEAAQ). The segment covering 340-350 (TTETPKCSSPR) has biased composition (polar residues). Serine 362 carries the post-translational modification Phosphoserine.

This sequence belongs to the CWC16 family.

It localises to the nucleus. Its function is as follows. May be involved in mRNA splicing. The sequence is that of Probable splicing factor YJU2B from Homo sapiens (Human).